The chain runs to 786 residues: Calcium-independent phospholipase A2-gamma (786 aa).

An N-linked (GlcNAc...) asparagine glycan is attached at Asn4. Disordered regions lie at residues 158–180 (KKYS…IIDK), 225–285 (KENS…SLPI), and 321–348 (SKSQ…EEKK). Residues 225 to 245 (KENSHFQEKSELEGKKVEEGK) are compositionally biased toward basic and acidic residues. Polar residues-rich tracts occupy residues 246 to 258 (SSSL…TSQA) and 266 to 285 (SAGT…SLPI). The region spanning 449–644 (LTIDGGGTRG…LLNNPSALAM (196 aa)) is the PNPLA domain. The short motif at 453-458 (GGGTRG) is the GXGXXG element. The helical transmembrane segment at 483 to 503 (ICGVSTGAILAFMLGLFHLPL) threads the bilayer. The short motif at 485-489 (GVSTG) is the GXSXG element. Ser487 (nucleophile) is an active-site residue. The active-site Proton acceptor is Asp631. The DGA/G motif lies at 631 to 633 (DGG). An N6-succinyllysine modification is found at Lys740.

In terms of tissue distribution, expressed in kidney, heart and brain.

The protein resides in the endoplasmic reticulum membrane. Its subcellular location is the mitochondrion membrane. The protein localises to the peroxisome membrane. It catalyses the reaction a 1,2-diacyl-sn-glycero-3-phosphocholine + H2O = a 1-acyl-sn-glycero-3-phosphocholine + a fatty acid + H(+). The catalysed reaction is a 1,2-diacyl-sn-glycero-3-phosphocholine + H2O = a 2-acyl-sn-glycero-3-phosphocholine + a fatty acid + H(+). The enzyme catalyses a 1,2-diacyl-sn-glycero-3-phosphoethanolamine + H2O = a 1-acyl-sn-glycero-3-phosphoethanolamine + a fatty acid + H(+). It carries out the reaction a 1-O-(1Z-alkenyl)-2-acyl-sn-glycero-3-phosphocholine + H2O = a 1-O-(1Z-alkenyl)-sn-glycero-3-phosphocholine + a fatty acid + H(+). It catalyses the reaction a 1-acyl-sn-glycero-3-phosphocholine + H2O = sn-glycerol 3-phosphocholine + a fatty acid + H(+). The catalysed reaction is 1-acyl-2-(9Z,12Z)-octadecadienoyl-sn-glycero-3-phosphocholine + H2O = a 1-acyl-sn-glycero-3-phosphocholine + (9Z,12Z)-octadecadienoate + H(+). The enzyme catalyses 1-acyl-2-(5Z,8Z,11Z,14Z-eicosatetraenoyl)-sn-glycero-3-phosphocholine + H2O = a 1-acyl-sn-glycero-3-phosphocholine + (5Z,8Z,11Z,14Z)-eicosatetraenoate + H(+). It carries out the reaction 1-hexadecanoyl-2-(5Z,8Z,11Z,14Z-eicosatetraenoyl)-sn-glycero-3-phosphocholine + H2O = 1-hexadecanoyl-sn-glycero-3-phosphocholine + (5Z,8Z,11Z,14Z)-eicosatetraenoate + H(+). It catalyses the reaction 1-octadecanoyl-2-(9Z-octadecenoyl)-sn-glycero-3-phosphocholine + H2O = 1-octadecanoyl-sn-glycero-3-phosphocholine + (9Z)-octadecenoate + H(+). The catalysed reaction is 1-hexadecanoyl-2-(9Z-octadecenoyl)-sn-glycero-3-phosphocholine + H2O = 1-hexadecanoyl-sn-glycero-3-phosphocholine + (9Z)-octadecenoate + H(+). The enzyme catalyses 1-hexadecanoyl-2-(9Z,12Z-octadecadienoyl)-sn-glycero-3-phosphocholine + H2O = (9Z,12Z)-octadecadienoate + 1-hexadecanoyl-sn-glycero-3-phosphocholine + H(+). It carries out the reaction 1-acyl-2-(9Z,12Z)-octadecadienoyl-sn-glycero-3-phosphoethanolamine + H2O = a 1-acyl-sn-glycero-3-phosphoethanolamine + (9Z,12Z)-octadecadienoate + H(+). It catalyses the reaction 1-acyl-2-(5Z,8Z,11Z,14Z)-eicosatetraenoyl-sn-glycero-3-phosphoethanolamine + H2O = a 1-acyl-sn-glycero-3-phosphoethanolamine + (5Z,8Z,11Z,14Z)-eicosatetraenoate + H(+). The catalysed reaction is 1-hexadecanoyl-2-(5Z,8Z,11Z,14Z-eicosatetraenoyl)-sn-glycero-3-phosphoethanolamine + H2O = 1-hexadecanoyl-sn-glycero-3-phosphoethanolamine + (5Z,8Z,11Z,14Z)-eicosatetraenoate + H(+). The enzyme catalyses 1-hexadecanoyl-2-(5Z,8Z,11Z,14Z-eicosatetraenoyl)-sn-glycero-3-phosphocholine + H2O = 2-(5Z,8Z,11Z,14Z)-eicosatetraenoyl-sn-glycero-3-phosphocholine + hexadecanoate + H(+). It carries out the reaction 1-octadecanoyl-2-(9Z-octadecenoyl)-sn-glycero-3-phosphocholine + H2O = 2-(9Z-octadecenoyl)-sn-glycero-3-phosphocholine + octadecanoate + H(+). It catalyses the reaction 1-hexadecanoyl-2-(4Z,7Z,10Z,13Z,16Z,19Z-docosahexaenoyl)-sn-glycero-3-phosphocholine + H2O = 2-(4Z,7Z,10Z,13Z,16Z,19Z-docosahexaenoyl)-sn-glycero-3-phosphocholine + hexadecanoate + H(+). The catalysed reaction is 1-O-(1Z)-hexadecenyl-2 (5Z,8Z,11Z,14Z)-eicosatetraenoyl-sn-glycero-3-phosphocholine + H2O = 1-(1Z-hexadecenyl)-sn-glycero-3-phosphocholine + (5Z,8Z,11Z,14Z)-eicosatetraenoate + H(+). The enzyme catalyses 1-O-(1Z-hexadecenyl)-2-(9Z-octadecenoyl)-sn-glycero-3-phosphocholine + H2O = 1-(1Z-hexadecenyl)-sn-glycero-3-phosphocholine + (9Z)-octadecenoate + H(+). It carries out the reaction 1-hexadecanoyl-sn-glycero-3-phosphocholine + H2O = sn-glycerol 3-phosphocholine + hexadecanoate + H(+). It catalyses the reaction 1',3'-bis-[1,2-di-(9Z,12Z-octadecadienoyl)-sn-glycero-3-phospho]-glycerol + H2O = 1'-[1,2-di-(9Z,12Z-octadecadienoyl)-sn-glycero-3-phospho]-3'-[1-(9Z,12Z-octadecadienoyl)-sn-glycero-3-phospho]-glycerol + (9Z,12Z)-octadecadienoate + H(+). The catalysed reaction is 1'-[1-acyl-2-(9-hydroxy-(10E,12Z)-octadecadienoyl)-sn-glycero-3-phospho]-3'-[1,2-diacyl-sn-glycero-3-phospho]-glycerol + H2O = 9-hydroxy-(10E,12Z)-octadecadienoate + 1'-[1,2-diacyl-sn-glycero-3-phospho],3'-[1-acyl-sn-glycero-3-phospho]-glycerol + H(+). It functions in the pathway phospholipid metabolism. Calcium-independent phospholipase. Calcium-independent and membrane-bound phospholipase, that catalyzes the esterolytic cleavage of fatty acids from glycerophospholipids to yield free fatty acids and lysophospholipids, hence regulating membrane physical properties and the release of lipid second messengers and growth factors. Hydrolyzes phosphatidylethanolamine, phosphatidylcholine and probably phosphatidylinositol with a possible preference for the former. Has also a broad substrate specificity in terms of fatty acid moieties, hydrolyzing saturated and mono-unsaturated fatty acids at nearly equal rates from either the sn-1 or sn-2 position in diacyl phosphatidylcholine. However, has a weak activity toward polyunsaturated fatty acids at the sn-2 position, and thereby favors the production of 2-arachidonoyl lysophosphatidylcholine, a key branch point metabolite in eicosanoid signaling. On the other hand, can produce arachidonic acid from the sn-1 position of diacyl phospholipid and from the sn-2 position of arachidonate-containing plasmalogen substrates. Therefore, plays an important role in the mobilization of arachidonic acid in response to cellular stimuli and the generation of lipid second messengers. Can also hydrolyze lysophosphatidylcholine. In the mitochondrial compartment, catalyzes the hydrolysis and release of oxidized aliphatic chains from cardiolipin and integrates mitochondrial bioenergetics and signaling. It is essential for maintaining efficient bioenergetic mitochondrial function through tailoring mitochondrial membrane lipid metabolism and composition. This chain is Calcium-independent phospholipase A2-gamma, found in Oryctolagus cuniculus (Rabbit).